Reading from the N-terminus, the 435-residue chain is MAGQTVIVSGLNPAAILQSTIGGAPPSTAAAAAENGDTTRKVVPLSKDALQDFMVSIITQKLQGEKKPFYVLDLGEVVSLMDQWNVALPNVRPFYAVKCNPEPSFLSMLAAMGSNFVCASRAEIEYVLSLGISPERIVFANPCKPESDIIFAEKVGVNLTTYDSEDEVYKIKKHHPKCELLLRIKPMNDGNARCPMGPKYGALPEEIEPLLRIAQASRLTVSGVSFHIGSGDADSNAYLGAIAAAKQVFETAAKFGMSKMNVLDIGGGFTSGHQFTTAATAVKSALQQHFSNEPELTIIAEPGRFFAETAFTLATTIIGKRVRGDLREYWINDGLYGSMNCVLYDHATVTATPLACMSNRVNLNCSGSKMFPSTIFGPTCDALDTVLRDYHVPELQVNDWVIFPNMGAYTKAAGSNFNGFNTSAIVTHLAYAYPS.

Lys98 bears the N6-(pyridoxal phosphate)lysine mark. Pyridoxal 5'-phosphate contacts are provided by residues Ser230, Gly268, and Glu301–Arg304. Tyr344–Asp345 is a binding site for substrate. The active-site Proton donor; shared with dimeric partner is the Cys380. Asp381 is a binding site for substrate. Tyr409 contributes to the pyridoxal 5'-phosphate binding site.

The protein belongs to the Orn/Lys/Arg decarboxylase class-II family. Homodimer. Only the dimer is catalytically active, as the active sites are constructed of residues from both monomers. The cofactor is pyridoxal 5'-phosphate.

It catalyses the reaction L-ornithine + H(+) = putrescine + CO2. It participates in amine and polyamine biosynthesis; putrescine biosynthesis via L-ornithine pathway; putrescine from L-ornithine: step 1/1. Inhibited by antizyme (AZ) in response to polyamine levels. AZ inhibits the assembly of the functional homodimer by binding to ODC monomers and targeting them for ubiquitin-independent proteolytic destruction by the 26S proteasome. Its function is as follows. Catalyzes the first and rate-limiting step of polyamine biosynthesis that converts ornithine into putrescine, which is the precursor for the polyamines, spermidine and spermine. Polyamines are essential for cell proliferation and are implicated in cellular processes, ranging from DNA replication to apoptosis. The protein is Ornithine decarboxylase (ODC) of Capsicum annuum (Capsicum pepper).